A 248-amino-acid chain; its full sequence is Aspartate/glutamate leucyltransferase (248 aa).

The protein belongs to the R-transferase family. Bpt subfamily.

It is found in the cytoplasm. It carries out the reaction N-terminal L-glutamyl-[protein] + L-leucyl-tRNA(Leu) = N-terminal L-leucyl-L-glutamyl-[protein] + tRNA(Leu) + H(+). It catalyses the reaction N-terminal L-aspartyl-[protein] + L-leucyl-tRNA(Leu) = N-terminal L-leucyl-L-aspartyl-[protein] + tRNA(Leu) + H(+). Its function is as follows. Functions in the N-end rule pathway of protein degradation where it conjugates Leu from its aminoacyl-tRNA to the N-termini of proteins containing an N-terminal aspartate or glutamate. The chain is Aspartate/glutamate leucyltransferase from Methylobacterium nodulans (strain LMG 21967 / CNCM I-2342 / ORS 2060).